Here is an 832-residue protein sequence, read N- to C-terminus: Cadherin-17 (832 aa).

Residues methionine 1 to glycine 22 form the signal peptide. The Extracellular portion of the chain corresponds to glutamine 23–methionine 787. 7 consecutive Cadherin domains span residues proline 30–glutamine 128, serine 129–proline 244, valine 245–cysteine 340, proline 341–phenylalanine 449, glutamate 450–phenylalanine 566, serine 567–leucine 667, and alanine 668–glycine 777. N-linked (GlcNAc...) asparagine glycosylation is found at asparagine 149, asparagine 184, asparagine 250, asparagine 419, asparagine 456, asparagine 546, asparagine 587, and asparagine 722. The chain crosses the membrane as a helical span at residues alanine 788–isoleucine 808. Residues arginine 809–serine 832 lie on the Cytoplasmic side of the membrane.

Expressed in the gastrointestinal tract and pancreatic duct. Not detected in kidney, lung, liver, brain, adrenal gland and skin.

Its subcellular location is the cell membrane. Its function is as follows. Cadherins are calcium-dependent cell adhesion proteins. They preferentially interact with themselves in a homophilic manner in connecting cells; cadherins may thus contribute to the sorting of heterogeneous cell types. LI-cadherin may have a role in the morphological organization of liver and intestine. Involved in intestinal peptide transport. This Homo sapiens (Human) protein is Cadherin-17 (CDH17).